Reading from the N-terminus, the 249-residue chain is Adenosylcobinamide-GDP ribazoletransferase (249 aa).

A run of 7 helical transmembrane segments spans residues 29–49, 50–70, 104–124, 131–151, 165–185, 194–214, and 226–246; these read LYWF…CAWL, PLSI…GFIV, VGSF…VAIL, AFAL…LLAA, GFVG…SLMM, PFLL…IGFL, and VLGA…GVAF.

This sequence belongs to the CobS family. Mg(2+) serves as cofactor.

The protein resides in the cell inner membrane. It catalyses the reaction alpha-ribazole + adenosylcob(III)inamide-GDP = adenosylcob(III)alamin + GMP + H(+). The catalysed reaction is alpha-ribazole 5'-phosphate + adenosylcob(III)inamide-GDP = adenosylcob(III)alamin 5'-phosphate + GMP + H(+). It participates in cofactor biosynthesis; adenosylcobalamin biosynthesis; adenosylcobalamin from cob(II)yrinate a,c-diamide: step 7/7. Functionally, joins adenosylcobinamide-GDP and alpha-ribazole to generate adenosylcobalamin (Ado-cobalamin). Also synthesizes adenosylcobalamin 5'-phosphate from adenosylcobinamide-GDP and alpha-ribazole 5'-phosphate. This chain is Adenosylcobinamide-GDP ribazoletransferase, found in Chlorobium phaeovibrioides (strain DSM 265 / 1930) (Prosthecochloris vibrioformis (strain DSM 265)).